Consider the following 316-residue polypeptide: Delta(1)-pyrroline-2-carboxylate reductase (316 aa).

This sequence belongs to the ornithine cyclodeaminase/mu-crystallin family. As to quaternary structure, homodimer.

It carries out the reaction L-proline + NAD(+) = 1-pyrroline-2-carboxylate + NADH + H(+). The catalysed reaction is L-proline + NADP(+) = 1-pyrroline-2-carboxylate + NADPH + H(+). Its function is as follows. Catalyzes the reduction of Delta(1)-pyrroline-2-carboxylate (Pyr2C) to L-proline, using preferentially NADPH over NADH as the electron donor. Together with LhpH, is involved in a metabolic pathway that converts trans-3-hydroxy-L-proline (t3LHyp) to L-proline. To a much lesser extent, can also reduce Delta(1)-piperideine-2-carboxylate (Pip2C) to L-pipecolate in vitro; however, this activity has likely no physiological significance in vivo since C.psychrerythraea probably possesses no ability to metabolize D-lysine via the L-pipecolate pathway. Does not show ornithine cyclodeaminase (OCD) activity. The sequence is that of Delta(1)-pyrroline-2-carboxylate reductase from Colwellia psychrerythraea (strain 34H / ATCC BAA-681) (Vibrio psychroerythus).